Consider the following 660-residue polypeptide: MKAIVFAYHDIGCVGLKALEKAGFDIQAVFTHTDDPNENHFFSSVARVSAEMGLTVFAPENVNHPLWIERIREMKPDVIFSFYYRHMLSDEILNLAPKGAFNLHGSLLPKYRGRAPINWAIVNGETETGVTLHKMTAKADAGDIVAQEKVTIEDTDTSLILHEKVREAAAKLMAHTLPHIASGNYSTTAQDESQATYYGRRCADDGLIDWNADAKTVHNLVRAVTEPYPGAFTFLGERKMIIWRARPVADNQGKRPGTVISTEPLVIACAKGAIEVITGQSENGLYVQGSRLATEMGIVTDVRVGPKATAQVKRRQRVLILGVNGFIGNHLTERLLKDGNYDIYGMDIGSSAIERFIGNPRFHFIEGDVSIHTEWIEYHIKKCDVILPLVAIATPIEYTRNPLRVFELDFEENLKIVRYCVKYNKRIIFPSTSEVYGMCDDKEFDEDNSRLIVGPINKQRWIYSVSKQLLDRVIWAYGAKEGLKFTLFRPFNWMGPRLDNLNSARIGSSRAITQLILNLVEGSPIKLVDGGEQKRCFTDINDGIEALFRIIENRDNKCDGQIINIGNPTNEASIRELAEMLLDCFEKHELRGHFPPFAGFKKIESSSYYGKGYQDVEHRKPSIKNAERLLDWKPTIETRQTVEETLDFFLRGAVEELGNK.

The interval 1 to 304 (MKAIVFAYHD…EMGIVTDVRV (304 aa)) is formyltransferase ArnAFT. The Proton donor; for formyltransferase activity role is filled by histidine 104. Residues arginine 114 and 136–140 (TAKAD) contribute to the (6R)-10-formyltetrahydrofolate site. The interval 314–660 (RRQRVLILGV…RGAVEELGNK (347 aa)) is dehydrogenase ArnADH. Residues aspartate 347 and 368–369 (DV) each bind NAD(+). Residues alanine 393, tyrosine 398, and 432 to 433 (TS) contribute to the UDP-alpha-D-glucuronate site. Glutamate 434 (proton acceptor; for decarboxylase activity) is an active-site residue. Residues arginine 460, asparagine 492, 526–535 (KLVDGGEQKR), and tyrosine 613 contribute to the UDP-alpha-D-glucuronate site. Arginine 619 acts as the Proton donor; for decarboxylase activity in catalysis.

In the N-terminal section; belongs to the Fmt family. UDP-L-Ara4N formyltransferase subfamily. This sequence in the C-terminal section; belongs to the NAD(P)-dependent epimerase/dehydratase family. UDP-glucuronic acid decarboxylase subfamily. Homohexamer, formed by a dimer of trimers.

It carries out the reaction UDP-alpha-D-glucuronate + NAD(+) = UDP-beta-L-threo-pentopyranos-4-ulose + CO2 + NADH. It catalyses the reaction UDP-4-amino-4-deoxy-beta-L-arabinose + (6R)-10-formyltetrahydrofolate = UDP-4-deoxy-4-formamido-beta-L-arabinose + (6S)-5,6,7,8-tetrahydrofolate + H(+). It participates in nucleotide-sugar biosynthesis; UDP-4-deoxy-4-formamido-beta-L-arabinose biosynthesis; UDP-4-deoxy-4-formamido-beta-L-arabinose from UDP-alpha-D-glucuronate: step 1/3. Its pathway is nucleotide-sugar biosynthesis; UDP-4-deoxy-4-formamido-beta-L-arabinose biosynthesis; UDP-4-deoxy-4-formamido-beta-L-arabinose from UDP-alpha-D-glucuronate: step 3/3. It functions in the pathway bacterial outer membrane biogenesis; lipopolysaccharide biosynthesis. Bifunctional enzyme that catalyzes the oxidative decarboxylation of UDP-glucuronic acid (UDP-GlcUA) to UDP-4-keto-arabinose (UDP-Ara4O) and the addition of a formyl group to UDP-4-amino-4-deoxy-L-arabinose (UDP-L-Ara4N) to form UDP-L-4-formamido-arabinose (UDP-L-Ara4FN). The modified arabinose is attached to lipid A and is required for resistance to polymyxin and cationic antimicrobial peptides. In Proteus mirabilis (strain HI4320), this protein is Bifunctional polymyxin resistance protein ArnA.